We begin with the raw amino-acid sequence, 278 residues long: Tryptophan synthase alpha chain (278 aa).

Residues Glu-50 and Asp-61 each act as proton acceptor in the active site.

This sequence belongs to the TrpA family. As to quaternary structure, tetramer of two alpha and two beta chains.

It catalyses the reaction (1S,2R)-1-C-(indol-3-yl)glycerol 3-phosphate + L-serine = D-glyceraldehyde 3-phosphate + L-tryptophan + H2O. It functions in the pathway amino-acid biosynthesis; L-tryptophan biosynthesis; L-tryptophan from chorismate: step 5/5. In terms of biological role, the alpha subunit is responsible for the aldol cleavage of indoleglycerol phosphate to indole and glyceraldehyde 3-phosphate. This Nitrobacter hamburgensis (strain DSM 10229 / NCIMB 13809 / X14) protein is Tryptophan synthase alpha chain.